We begin with the raw amino-acid sequence, 486 residues long: Phosphomethylpyrimidine synthase (486 aa).

Substrate is bound by residues asparagine 80, methionine 109, tyrosine 139, histidine 175, 195–197, 236–239, and glutamate 275; these read SRG and DSLR. Histidine 279 contributes to the Zn(2+) binding site. Position 329 (tyrosine 329) interacts with substrate. Zn(2+) is bound at residue histidine 370. [4Fe-4S] cluster-binding residues include cysteine 450, cysteine 453, and cysteine 458.

Belongs to the ThiC family. [4Fe-4S] cluster serves as cofactor.

The catalysed reaction is 5-amino-1-(5-phospho-beta-D-ribosyl)imidazole + S-adenosyl-L-methionine = 4-amino-2-methyl-5-(phosphooxymethyl)pyrimidine + CO + 5'-deoxyadenosine + formate + L-methionine + 3 H(+). It participates in cofactor biosynthesis; thiamine diphosphate biosynthesis. Catalyzes the synthesis of the hydroxymethylpyrimidine phosphate (HMP-P) moiety of thiamine from aminoimidazole ribotide (AIR) in a radical S-adenosyl-L-methionine (SAM)-dependent reaction. This is Phosphomethylpyrimidine synthase from Trichodesmium erythraeum (strain IMS101).